The primary structure comprises 210 residues: Thiamine-phosphate synthase (210 aa).

4-amino-2-methyl-5-(diphosphooxymethyl)pyrimidine is bound by residues glutamine 36–lysine 40 and asparagine 68. 2 residues coordinate Mg(2+): aspartate 69 and aspartate 88. 4-amino-2-methyl-5-(diphosphooxymethyl)pyrimidine is bound at residue serine 107. 2-[(2R,5Z)-2-carboxy-4-methylthiazol-5(2H)-ylidene]ethyl phosphate is bound at residue threonine 133–threonine 135. 4-amino-2-methyl-5-(diphosphooxymethyl)pyrimidine is bound at residue lysine 136. 2-[(2R,5Z)-2-carboxy-4-methylthiazol-5(2H)-ylidene]ethyl phosphate is bound by residues glycine 165 and valine 185–serine 186.

This sequence belongs to the thiamine-phosphate synthase family. The cofactor is Mg(2+).

It carries out the reaction 2-[(2R,5Z)-2-carboxy-4-methylthiazol-5(2H)-ylidene]ethyl phosphate + 4-amino-2-methyl-5-(diphosphooxymethyl)pyrimidine + 2 H(+) = thiamine phosphate + CO2 + diphosphate. The enzyme catalyses 2-(2-carboxy-4-methylthiazol-5-yl)ethyl phosphate + 4-amino-2-methyl-5-(diphosphooxymethyl)pyrimidine + 2 H(+) = thiamine phosphate + CO2 + diphosphate. It catalyses the reaction 4-methyl-5-(2-phosphooxyethyl)-thiazole + 4-amino-2-methyl-5-(diphosphooxymethyl)pyrimidine + H(+) = thiamine phosphate + diphosphate. It functions in the pathway cofactor biosynthesis; thiamine diphosphate biosynthesis; thiamine phosphate from 4-amino-2-methyl-5-diphosphomethylpyrimidine and 4-methyl-5-(2-phosphoethyl)-thiazole: step 1/1. Its function is as follows. Condenses 4-methyl-5-(beta-hydroxyethyl)thiazole monophosphate (THZ-P) and 2-methyl-4-amino-5-hydroxymethyl pyrimidine pyrophosphate (HMP-PP) to form thiamine monophosphate (TMP). The chain is Thiamine-phosphate synthase from Cronobacter sakazakii (strain ATCC BAA-894) (Enterobacter sakazakii).